The sequence spans 239 residues: Orotidine 5'-phosphate decarboxylase (239 aa).

Substrate is bound by residues aspartate 11, lysine 33, 60–69 (DLKCHDIPTT), threonine 123, arginine 185, glutamine 194, glycine 214, and arginine 215. Catalysis depends on lysine 62, which acts as the Proton donor.

Belongs to the OMP decarboxylase family. Type 1 subfamily. In terms of assembly, homodimer.

It catalyses the reaction orotidine 5'-phosphate + H(+) = UMP + CO2. It participates in pyrimidine metabolism; UMP biosynthesis via de novo pathway; UMP from orotate: step 2/2. Functionally, catalyzes the decarboxylation of orotidine 5'-monophosphate (OMP) to uridine 5'-monophosphate (UMP). The polypeptide is Orotidine 5'-phosphate decarboxylase (Bacillus licheniformis (strain ATCC 14580 / DSM 13 / JCM 2505 / CCUG 7422 / NBRC 12200 / NCIMB 9375 / NCTC 10341 / NRRL NRS-1264 / Gibson 46)).